We begin with the raw amino-acid sequence, 344 residues long: tRNA N6-adenosine threonylcarbamoyltransferase (344 aa).

Fe cation is bound by residues His111 and His115. Substrate is bound by residues 133–137, Asp166, Gly179, and Asn283; that span reads LVSGG. Residue Asp311 participates in Fe cation binding.

Belongs to the KAE1 / TsaD family. The cofactor is Fe(2+).

It is found in the cytoplasm. The catalysed reaction is L-threonylcarbamoyladenylate + adenosine(37) in tRNA = N(6)-L-threonylcarbamoyladenosine(37) in tRNA + AMP + H(+). Its function is as follows. Required for the formation of a threonylcarbamoyl group on adenosine at position 37 (t(6)A37) in tRNAs that read codons beginning with adenine. Is involved in the transfer of the threonylcarbamoyl moiety of threonylcarbamoyl-AMP (TC-AMP) to the N6 group of A37, together with TsaE and TsaB. TsaD likely plays a direct catalytic role in this reaction. This Orientia tsutsugamushi (strain Ikeda) (Rickettsia tsutsugamushi) protein is tRNA N6-adenosine threonylcarbamoyltransferase.